The following is a 617-amino-acid chain: Transmembrane protein 232 (617 aa).

Residues 129–149 (LVKIGYLIFLRLFVFFLHGHL) form a helical membrane-spanning segment. Positions 567–604 (LKQIEAVCEAQNRKDEEEKEKIRFQEIMKQRERKLNKQ) form a coiled coil. Residues 598–617 (ERKLNKQTKPYEITPSEKKE) are disordered.

It is found in the membrane. Functionally, plays a critical role for male fertility and sperm motility by regulating sperm cytoplasm removal and maintaining axoneme integrity. The chain is Transmembrane protein 232 (Tmem232) from Rattus norvegicus (Rat).